The sequence spans 418 residues: Nuclear hormone receptor family member nhr-209 (418 aa).

A DNA-binding region (nuclear receptor) is located at residues 43–121 (PEKCAVCKNA…VGMDSTAIRA (79 aa)). 2 consecutive NR C4-type zinc fingers follow at residues 46-66 (CAVCKNAAIGYHYNVPSCNGC) and 82-104 (CMNHKNCLDEIESDESQRLCKGC). The NR LBD domain occupies 174–414 (TIPDGFEDMR…SHPPKSLFDE (241 aa)). An AF-2 region spans residues 403 to 414 (ECSHPPKSLFDE).

This sequence belongs to the nuclear hormone receptor family.

Its subcellular location is the nucleus. Its function is as follows. Transcriptional regulator. Plays a role in modulation of lifespan and immunity. The sequence is that of Nuclear hormone receptor family member nhr-209 from Caenorhabditis elegans.